The sequence spans 619 residues: MALLQIAEPGQSPKPHERRLAVGIDLGTTNSLVAAVRSGVAEPLPDAQGRLILPSAVRYHAERAEVGESARAAAAEDPFNTVISVKRLMGRGLEDVKQLGEQLPYRFRQGESHMPFIETVQGLKSPVEVSADILRELRQRAETTLGGELVGAVITVPAYFDDAQRQATKDAARLAGLNVLRLLNEPTAAAVAYGLDKGAEGLVAIYDLGGGTFDISILRLTRGVFEVLATGGDTALGGDDFDHAIAGWVIEEAGLSADLDPGSQRQLLQIACAAKERLTDEASVRVAYGDWSGELSRATLDELIEPFVARSLKSCRRAVRDSGVDLEEIRSVVMVGGSTRVPRVRTAVGELFGCEPLTDIDPDQVVAIGAAIQADALAGNKRGEELLLLDVIPLSLGLETMGGLMEKVIPRNTTIPVARAQEFTTYKDGQTAMMIHVLQGERELVKDCRSLARFELRGIPPMVAGAAKIRVTFQVDADGLLGVSARELSSGVEASIQVKPSYGLTDGEIARMLKDSFDYAGDDKAARALREQQVEAQRLLEAVQSALDVDGERLLDEEERLAIAAQMDTLRELAGGSDTAAIENQIKRLSQVTDAFAARRMDATVKAALSGRRLNEIEE.

This sequence belongs to the heat shock protein 70 family.

In terms of biological role, chaperone involved in the maturation of iron-sulfur cluster-containing proteins. Has a low intrinsic ATPase activity which is markedly stimulated by HscB. The sequence is that of Chaperone protein HscA homolog from Pseudomonas aeruginosa (strain LESB58).